A 515-amino-acid chain; its full sequence is NADH-ubiquinone oxidoreductase chain 2 (515 aa).

5 helical membrane passes run 63 to 83 (WPIG…NSGS), 250 to 270 (VFIY…CSIA), 299 to 319 (FVLV…GLFI), 356 to 376 (AITF…AGFC), and 379 to 399 (FYLF…VGVV).

It belongs to the complex I subunit 2 family.

Its subcellular location is the mitochondrion inner membrane. The enzyme catalyses a ubiquinone + NADH + 5 H(+)(in) = a ubiquinol + NAD(+) + 4 H(+)(out). Its function is as follows. Core subunit of the mitochondrial membrane respiratory chain NADH dehydrogenase (Complex I) that is believed to belong to the minimal assembly required for catalysis. Complex I functions in the transfer of electrons from NADH to the respiratory chain. The immediate electron acceptor for the enzyme is believed to be ubiquinone. In Beta vulgaris (Sugar beet), this protein is NADH-ubiquinone oxidoreductase chain 2 (ND2).